Consider the following 811-residue polypeptide: Transmembrane protease serine 6 (811 aa).

The tract at residues 1–48 (MPRCFQLPCSTRMPTTEVPQAADGQGDAGDGEEAAEPEGKFKPPKNTK) is disordered. At 1-59 (MPRCFQLPCSTRMPTTEVPQAADGQGDAGDGEEAAEPEGKFKPPKNTKRKNRDYVRFTP) the chain is on the cytoplasmic side. Positions 8-18 (PCSTRMPTTEV) are enriched in polar residues. The helical; Signal-anchor for type II membrane protein transmembrane segment at 60 to 80 (LLLVLAALVSAGVMLWYFLGY) threads the bilayer. Over 81–811 (KAEVTVSQVY…VINWIQQVLT (731 aa)) the chain is Extracellular. The region spanning 86 to 209 (VSQVYSGSLR…EGLVILEASV (124 aa)) is the SEA domain. Residues asparagine 138, asparagine 184, asparagine 216, asparagine 338, asparagine 433, and asparagine 453 are each glycosylated (N-linked (GlcNAc...) asparagine). CUB domains lie at 213 to 336 (VVLN…QDCQ) and 323 to 440 (FLLS…QISL). Cysteine 335 and cysteine 366 are disulfide-bonded. LDL-receptor class A domains lie at 445–477 (VQVYYSLYNQSDPCPGEFLCSVNGLCVPACDGI), 478–514 (KDCPNGLDERNCVCRAMFQCQEDSTCISLPRVCDRQP), and 518–555 (NGSDEEQCQEGVPCGTFTFQCEDRSCVKKPNPECDGQS). Cystine bridges form between cysteine 458–cysteine 470, cysteine 464–cysteine 480, cysteine 474–cysteine 489, cysteine 491–cysteine 503, cysteine 497–cysteine 516, cysteine 510–cysteine 525, cysteine 531–cysteine 543, cysteine 538–cysteine 557, cysteine 551–cysteine 566, and cysteine 602–cysteine 618. The N-linked (GlcNAc...) asparagine glycan is linked to asparagine 518. In terms of domain architecture, Peptidase S1 spans 577–811 (IVGGTVSSEG…VINWIQQVLT (235 aa)). Catalysis depends on charge relay system residues histidine 617 and aspartate 668. Disulfide bonds link cysteine 702-cysteine 768, cysteine 733-cysteine 747, and cysteine 758-cysteine 787. The active-site Charge relay system is the serine 762.

This sequence belongs to the peptidase S1 family. Interacts with HJV. In terms of processing, the single-chain zymogen undergoes autoproteolytic processing. This results in TMPRSS6 shedding from the cell surface and conversion into an activated two-chains form which is released extracellularly. The process involves a trans-activation mechanism that requires TMPRSS6 oligomerization. As to expression, expressed at highest levels in adult mice liver, kidney and uterus. Also strongly expressed within the nasal cavity by olfactory epithelial cells. A weak, but detectable, signal in adult mice tissues analyzed including brain, lung, heart, kidney, spleen, muscle, intestine, thymus and pancreas. No signal in residual embryonic yolk sac, developing kidney tubules or in embryonic tissues analyzed including lung, heart, gastrointestinal tract and epithelium of the oral cavity.

It is found in the cell membrane. Membrane-bound serine protease. Through the cleavage of cell surface HJV, a regulator of the expression of the iron absorption-regulating hormone hepicidin/HAMP, plays a role in iron homeostasis. This Mus musculus (Mouse) protein is Transmembrane protease serine 6 (Tmprss6).